Here is a 230-residue protein sequence, read N- to C-terminus: 5'-methylthioadenosine/S-adenosylhomocysteine nucleosidase (230 aa).

Glutamate 12 functions as the Proton acceptor in the catalytic mechanism. Substrate-binding positions include glycine 78, valine 152, and 173-174; that span reads ME. The Proton donor role is filled by aspartate 197.

The protein belongs to the PNP/UDP phosphorylase family. MtnN subfamily.

It carries out the reaction S-adenosyl-L-homocysteine + H2O = S-(5-deoxy-D-ribos-5-yl)-L-homocysteine + adenine. It catalyses the reaction S-methyl-5'-thioadenosine + H2O = 5-(methylsulfanyl)-D-ribose + adenine. The catalysed reaction is 5'-deoxyadenosine + H2O = 5-deoxy-D-ribose + adenine. The protein operates within amino-acid biosynthesis; L-methionine biosynthesis via salvage pathway; S-methyl-5-thio-alpha-D-ribose 1-phosphate from S-methyl-5'-thioadenosine (hydrolase route): step 1/2. Catalyzes the irreversible cleavage of the glycosidic bond in both 5'-methylthioadenosine (MTA) and S-adenosylhomocysteine (SAH/AdoHcy) to adenine and the corresponding thioribose, 5'-methylthioribose and S-ribosylhomocysteine, respectively. Also cleaves 5'-deoxyadenosine, a toxic by-product of radical S-adenosylmethionine (SAM) enzymes, into 5-deoxyribose and adenine. The protein is 5'-methylthioadenosine/S-adenosylhomocysteine nucleosidase of Glaesserella parasuis serovar 5 (strain SH0165) (Haemophilus parasuis).